A 395-amino-acid polypeptide reads, in one-letter code: Axin-like protein 1 (395 aa).

An RGS domain is found at 4–132 (RSKTFSDRIL…TTTADVSNTW (129 aa)). Positions 190–230 (QETKNSSETEEEKKKERSADPYGSDGFAPPPQSTQTHTLRN) are disordered. The segment covering 194–208 (NSSETEEEKKKERSA) has biased composition (basic and acidic residues). Residues 301-386 (EIQKLTVELR…RITAICRMCP (86 aa)) form the DIX domain.

Interacts with bar-1, dsh-2, gsk-3, and mig-5.

Its function is as follows. Works in parallel with pry-1 in negatively regulating bar-1 signaling in vulval precursor cells and Q neuroblasts. Shown to have a role in excretory cell development. This chain is Axin-like protein 1 (axl-1), found in Caenorhabditis briggsae.